The sequence spans 180 residues: tRNA (cytidine(56)-2'-O)-methyltransferase (180 aa).

S-adenosyl-L-methionine is bound by residues L83, 115–119 (GAEKV), and 133–140 (VGNQPHSE).

This sequence belongs to the aTrm56 family. In terms of assembly, homodimer.

The protein resides in the cytoplasm. The enzyme catalyses cytidine(56) in tRNA + S-adenosyl-L-methionine = 2'-O-methylcytidine(56) in tRNA + S-adenosyl-L-homocysteine + H(+). Functionally, specifically catalyzes the AdoMet-dependent 2'-O-ribose methylation of cytidine at position 56 in tRNAs. The protein is tRNA (cytidine(56)-2'-O)-methyltransferase of Methanococcus aeolicus (strain ATCC BAA-1280 / DSM 17508 / OCM 812 / Nankai-3).